Reading from the N-terminus, the 527-residue chain is Arginine--tRNA ligase (527 aa).

The short motif at 108 to 118 (ANPTGPLHIGH) is the 'HIGH' region element.

It belongs to the class-I aminoacyl-tRNA synthetase family. In terms of assembly, monomer.

Its subcellular location is the cytoplasm. The enzyme catalyses tRNA(Arg) + L-arginine + ATP = L-arginyl-tRNA(Arg) + AMP + diphosphate. This Sulfurimonas denitrificans (strain ATCC 33889 / DSM 1251) (Thiomicrospira denitrificans (strain ATCC 33889 / DSM 1251)) protein is Arginine--tRNA ligase.